The following is a 119-amino-acid chain: Basic phospholipase A2 acanthin-1 (119 aa).

Cystine bridges form between cysteine 11/cysteine 71, cysteine 27/cysteine 118, cysteine 29/cysteine 45, cysteine 44/cysteine 99, cysteine 51/cysteine 92, cysteine 60/cysteine 85, and cysteine 78/cysteine 90. 3 residues coordinate Ca(2+): tyrosine 28, glycine 30, and glycine 32. Histidine 48 is a catalytic residue. Aspartate 49 lines the Ca(2+) pocket. Residue aspartate 93 is part of the active site.

Ca(2+) serves as cofactor. In terms of tissue distribution, expressed by the venom gland.

The protein resides in the secreted. The catalysed reaction is a 1,2-diacyl-sn-glycero-3-phosphocholine + H2O = a 1-acyl-sn-glycero-3-phosphocholine + a fatty acid + H(+). In terms of biological role, snake venom phospholipase A2 (PLA2) that potently inhibits ADP-(IC(50)=10 nM) and collagen-induced (IC(50)=7 nM) platelet aggregation when tested on human whole blood. PLA2 catalyzes the calcium-dependent hydrolysis of the 2-acyl groups in 3-sn-phosphoglycerides. In Acanthophis antarcticus (Common death adder), this protein is Basic phospholipase A2 acanthin-1.